A 236-amino-acid chain; its full sequence is Sugar fermentation stimulation protein homolog (236 aa).

The protein belongs to the SfsA family.

This is Sugar fermentation stimulation protein homolog from Methylobacterium nodulans (strain LMG 21967 / CNCM I-2342 / ORS 2060).